Consider the following 208-residue polypeptide: Uracil phosphoribosyltransferase (208 aa).

5-phospho-alpha-D-ribose 1-diphosphate is bound by residues Arg-78, Arg-103, and 130–138 (DPMLATGGT). Residues Ile-193 and 198-200 (GDA) each bind uracil. Residue Asp-199 participates in 5-phospho-alpha-D-ribose 1-diphosphate binding.

It belongs to the UPRTase family. Mg(2+) is required as a cofactor.

It catalyses the reaction UMP + diphosphate = 5-phospho-alpha-D-ribose 1-diphosphate + uracil. The protein operates within pyrimidine metabolism; UMP biosynthesis via salvage pathway; UMP from uracil: step 1/1. Its activity is regulated as follows. Allosterically activated by GTP. Catalyzes the conversion of uracil and 5-phospho-alpha-D-ribose 1-diphosphate (PRPP) to UMP and diphosphate. The sequence is that of Uracil phosphoribosyltransferase from Desulforapulum autotrophicum (strain ATCC 43914 / DSM 3382 / VKM B-1955 / HRM2) (Desulfobacterium autotrophicum).